The following is a 290-amino-acid chain: Ribosomal RNA small subunit methyltransferase A (290 aa).

The S-adenosyl-L-methionine site is built by asparagine 27, leucine 29, glycine 54, glutamate 75, aspartate 100, and asparagine 125.

The protein belongs to the class I-like SAM-binding methyltransferase superfamily. rRNA adenine N(6)-methyltransferase family. RsmA subfamily.

The protein resides in the cytoplasm. The catalysed reaction is adenosine(1518)/adenosine(1519) in 16S rRNA + 4 S-adenosyl-L-methionine = N(6)-dimethyladenosine(1518)/N(6)-dimethyladenosine(1519) in 16S rRNA + 4 S-adenosyl-L-homocysteine + 4 H(+). In terms of biological role, specifically dimethylates two adjacent adenosines (A1518 and A1519) in the loop of a conserved hairpin near the 3'-end of 16S rRNA in the 30S particle. May play a critical role in biogenesis of 30S subunits. This chain is Ribosomal RNA small subunit methyltransferase A, found in Streptococcus pneumoniae (strain ATCC BAA-255 / R6).